A 227-amino-acid polypeptide reads, in one-letter code: Endolytic peptidoglycan transglycosylase RlpA (227 aa).

A signal peptide spans 1–21; sequence MMNHKFVLLILLIFYCFFLSG. A lipid anchor (N-palmitoyl cysteine) is attached at Cys22. Cys22 carries the S-diacylglycerol cysteine lipid modification.

Belongs to the RlpA family.

The protein localises to the cell membrane. In terms of biological role, lytic transglycosylase with a strong preference for naked glycan strands that lack stem peptides. The protein is Endolytic peptidoglycan transglycosylase RlpA of Rickettsia bellii (strain RML369-C).